A 278-amino-acid chain; its full sequence is Dehydrogenase/reductase SDR family member 4 (278 aa).

36–60 (LVTASTDGIGFAIARRLAQDGAHVV) is a binding site for NADP(+). N6-acetyllysine; alternate is present on K92. N6-succinyllysine; alternate is present on K92. K105 is subject to N6-acetyllysine. Residue I140 is modified to Phosphoserine. S169 contributes to the substrate binding site. Y182 functions as the Proton acceptor in the catalytic mechanism. K186 serves as a coordination point for NADP(+). Position 216 is an N6-acetyllysine; alternate (K216). The residue at position 216 (K216) is an N6-succinyllysine; alternate. Position 220 is a phosphoserine (S220). K227 and K234 each carry N6-succinyllysine. The short motif at 276–278 (SRL) is the Peroxisomal targeting signal element.

It belongs to the short-chain dehydrogenases/reductases (SDR) family. As to quaternary structure, homotetramer. As to expression, predominantly expressed in normal cervix (at protein level). Expressed in some neoplastic cervical tissues, but not in normal cervix (at protein level). In terms of tissue distribution, expressed in a few neoplastic cervical tissues. As to expression, high expression in liver.

The protein localises to the peroxisome. Its subcellular location is the nucleus. It carries out the reaction a secondary alcohol + NADP(+) = a ketone + NADPH + H(+). It catalyses the reaction 3beta-hydroxy-5beta-pregnane-20-one + NADP(+) = 5beta-pregnan-3,20-dione + NADPH + H(+). The enzyme catalyses 5beta-dihydrotestosterone + NADPH + H(+) = 5beta-androstane-3beta,17beta-diol + NADP(+). The catalysed reaction is 5beta-androstane-3,17-dione + NADPH + H(+) = 3beta-hydroxy-5beta-androstane-17-one + NADP(+). It carries out the reaction isatin + NADPH + H(+) = 3-hydroxyindolin-2-one + NADP(+). It catalyses the reaction lithocholate + NADP(+) = 3-oxo-5beta-cholan-24-oate + NADPH + H(+). The enzyme catalyses 3-oxo-5beta-cholan-24-oate + NADPH + H(+) = isolithocholate + NADP(+). With respect to regulation, inhibited by flavonoids (quercetin and genistein), cetylpyridium chloride, phenylhexane and valproic acid. Low inhibition is observed with fatty acids (myristic acid and lauric acid). No significant inhibition is observed with barbital, dicumarol, indomethacin, metyrapone, ethacrynic acid, disulfiram, hexestrol and benzodiazepines (diazepam and nitrazepam). NADPH-dependent oxidoreductase which catalyzes the reduction of a variety of compounds bearing carbonyl groups including ketosteroids, alpha-dicarbonyl compounds, aldehydes, aromatic ketones and quinones. Reduces 3-ketosteroids and benzil into 3beta-hydroxysteroids and R-benzoin, respectively, in contrast to the stereoselectivity of non-primate DHRS4s which produce 3alpha-hydroxysteroids and S-benzoin. Diplays low activity toward all-trans-retinal and no activity toward 9-cis-retinal as compared to non-primate mammals. In the reverse reaction, catalyze the NAD-dependent oxidation of 3beta-hydroxysteroids and alcohol, but with much lower efficiency. Involved in the metabolism of 3beta-hydroxysteroids, isatin and xenobiotic carbonyl compounds. In terms of biological role, no detected catalytic activity in vitro, possibly due to the lack of catalytic site. Functionally, NADPH-dependent oxidoreductase which catalyzes the reduction of a variety of compounds bearing carbonyl groups including ketosteroids, alpha-dicarbonyl compounds, aldehydes, aromatic ketones and quinones. Involved in the metabolism of 3beta-hydroxysteroids, isatin and xenobiotic carbonyl compounds. Has a higher catalytic activity for xenobiotic alpha-dicarbonyl compounds, sucha as benzil, than isoform 1 and is involved in benzil detoxification. This chain is Dehydrogenase/reductase SDR family member 4, found in Homo sapiens (Human).